Reading from the N-terminus, the 158-residue chain is MRIGHGVDVHKLVKGEDLVLGGVQIPSDLGLKGHSDADVLIHAIMDAMLGSLALGDIGKHFPDDDPRYHQIDSKVLLKKTYQLITSYGYQLINLDSTIMAEKPKLAPYIDEMRITISDVLDLYPSQIGIKATTFEKLGFVGSGQGIMAQAVVLMERLY.

A divalent metal cation contacts are provided by aspartate 8 and histidine 10. Residues 8–10 (DVH) and 34–35 (HS) contribute to the 4-CDP-2-C-methyl-D-erythritol 2-phosphate site. Histidine 42 provides a ligand contact to a divalent metal cation. Residues 56–58 (DIG), 61–65 (FPDDD), 132–135 (TTFE), and phenylalanine 139 each bind 4-CDP-2-C-methyl-D-erythritol 2-phosphate.

It belongs to the IspF family. As to quaternary structure, homotrimer. A divalent metal cation is required as a cofactor.

The catalysed reaction is 4-CDP-2-C-methyl-D-erythritol 2-phosphate = 2-C-methyl-D-erythritol 2,4-cyclic diphosphate + CMP. It participates in isoprenoid biosynthesis; isopentenyl diphosphate biosynthesis via DXP pathway; isopentenyl diphosphate from 1-deoxy-D-xylulose 5-phosphate: step 4/6. In terms of biological role, involved in the biosynthesis of isopentenyl diphosphate (IPP) and dimethylallyl diphosphate (DMAPP), two major building blocks of isoprenoid compounds. Catalyzes the conversion of 4-diphosphocytidyl-2-C-methyl-D-erythritol 2-phosphate (CDP-ME2P) to 2-C-methyl-D-erythritol 2,4-cyclodiphosphate (ME-CPP) with a corresponding release of cytidine 5-monophosphate (CMP). This chain is 2-C-methyl-D-erythritol 2,4-cyclodiphosphate synthase, found in Natranaerobius thermophilus (strain ATCC BAA-1301 / DSM 18059 / JW/NM-WN-LF).